The sequence spans 188 residues: Transmembrane protein 160 (188 aa).

Residues 1–96 (MGGGWWWARA…ISFMQSDMGR (96 aa)) constitute a mitochondrion transit peptide. The interval 25 to 52 (PPRPRSGGARGSFAPGHGPRAGASPPPV) is disordered. Residues 29 to 38 (RSGGARGSFA) are compositionally biased toward low complexity. Ser-48 is subject to Phosphoserine. Transmembrane regions (helical) follow at residues 102 to 122 (FFLLGGLCVVWGGASYVVGLA) and 135 to 155 (AAAGVGAVLAAGLLWACAVGL).

Belongs to the TMEM160 family.

It localises to the mitochondrion inner membrane. This chain is Transmembrane protein 160, found in Bos taurus (Bovine).